Here is a 296-residue protein sequence, read N- to C-terminus: Ribosomal RNA small subunit methyltransferase H (296 aa).

Residues 38–40 (GVH), Glu57, Phe80, Asp103, and His110 contribute to the S-adenosyl-L-methionine site.

It belongs to the methyltransferase superfamily. RsmH family.

It localises to the cytoplasm. The enzyme catalyses cytidine(1402) in 16S rRNA + S-adenosyl-L-methionine = N(4)-methylcytidine(1402) in 16S rRNA + S-adenosyl-L-homocysteine + H(+). Functionally, specifically methylates the N4 position of cytidine in position 1402 (C1402) of 16S rRNA. The polypeptide is Ribosomal RNA small subunit methyltransferase H (Borreliella burgdorferi (strain ATCC 35210 / DSM 4680 / CIP 102532 / B31) (Borrelia burgdorferi)).